The sequence spans 83 residues: Conotoxin Pu6.1 (83 aa).

The N-terminal stretch at 1–19 (MKLVLAIVLILMLVSLSTG) is a signal peptide. Positions 20–42 (AEESGQEISMVGPPLYIWDPIPP) are excised as a propeptide. Disulfide bonds link Cys-43-Cys-57, Cys-50-Cys-62, and Cys-56-Cys-78.

Belongs to the conotoxin I3 superfamily. In terms of tissue distribution, expressed by the venom duct.

Its subcellular location is the secreted. This is Conotoxin Pu6.1 from Conus pulicarius (Flea-bitten cone).